We begin with the raw amino-acid sequence, 408 residues long: CST complex subunit STN1 (408 aa).

The segment at Met8 to Pro195 is interaction with CTC1. A DNA-binding region (OB) is located at residues Val64–Val165. Winged helix-turn-helix (wHTH) stretches follow at residues Glu201–Ser304 and Lys305–Phe408.

This sequence belongs to the STN1 family. As to quaternary structure, component of the CST complex, composed of TEN1/C17orf106, CTC1/C17orf68 and STN1; in the complex interacts directly with TEN1 and CTC1. Interacts with ACD/TPP1, POT1 and POLA1.

It localises to the nucleus. The protein resides in the chromosome. It is found in the telomere. Functionally, component of the CST complex proposed to act as a specialized replication factor promoting DNA replication under conditions of replication stress or natural replication barriers such as the telomere duplex. The CST complex binds single-stranded DNA with high affinity in a sequence-independent manner, while isolated subunits bind DNA with low affinity by themselves. Initially the CST complex has been proposed to protect telomeres from DNA degradation. However, the CST complex has been shown to be involved in several aspects of telomere replication. The CST complex inhibits telomerase and is involved in telomere length homeostasis; it is proposed to bind to newly telomerase-synthesized 3' overhangs and to terminate telomerase action implicating the association with the ACD:POT1 complex thus interfering with its telomerase stimulation activity. The CST complex is also proposed to be involved in fill-in synthesis of the telomeric C-strand probably implicating recruitment and activation of DNA polymerase alpha. The CST complex facilitates recovery from many forms of exogenous DNA damage; seems to be involved in the re-initiation of DNA replication at repaired forks and/or dormant origins. Required for efficicient replication of the duplex region of the telomere. Promotes efficient replication of lagging-strand telomeres. Promotes general replication start following replication-fork stalling implicating new origin firing. May be in involved in C-strand fill-in during late S/G2 phase independent of its role in telomere duplex replication. This is CST complex subunit STN1 from Rattus norvegicus (Rat).